The sequence spans 114 residues: T cell receptor beta variable 25-1 (114 aa).

Residues 1–21 (MTIRLLCYVGFYFLGAGLMEA) form the signal peptide. One can recognise an Ig-like domain in the interval 22–114 (DIYQTPRYLV…TSQYLCASSE (93 aa)). Cysteine 42 and cysteine 110 are disulfide-bonded. A glycan (N-linked (GlcNAc...) asparagine) is linked at asparagine 72.

In terms of assembly, alpha-beta TR is a heterodimer composed of an alpha and beta chain; disulfide-linked. The alpha-beta TR is associated with the transmembrane signaling CD3 coreceptor proteins to form the TR-CD3 (TcR or TCR). The assembly of alpha-beta TR heterodimers with CD3 occurs in the endoplasmic reticulum where a single alpha-beta TR heterodimer associates with one CD3D-CD3E heterodimer, one CD3G-CD3E heterodimer and one CD247 homodimer forming a stable octameric structure. CD3D-CD3E and CD3G-CD3E heterodimers preferentially associate with TR alpha and TR beta chains, respectively. The association of the CD247 homodimer is the last step of TcR assembly in the endoplasmic reticulum and is required for transport to the cell surface.

Its subcellular location is the cell membrane. V region of the variable domain of T cell receptor (TR) beta chain that participates in the antigen recognition. Alpha-beta T cell receptors are antigen specific receptors which are essential to the immune response and are present on the cell surface of T lymphocytes. Recognize peptide-major histocompatibility (MH) (pMH) complexes that are displayed by antigen presenting cells (APC), a prerequisite for efficient T cell adaptive immunity against pathogens. Binding of alpha-beta TR to pMH complex initiates TR-CD3 clustering on the cell surface and intracellular activation of LCK that phosphorylates the ITAM motifs of CD3G, CD3D, CD3E and CD247 enabling the recruitment of ZAP70. In turn ZAP70 phosphorylates LAT, which recruits numerous signaling molecules to form the LAT signalosome. The LAT signalosome propagates signal branching to three major signaling pathways, the calcium, the mitogen-activated protein kinase (MAPK) kinase and the nuclear factor NF-kappa-B (NF-kB) pathways, leading to the mobilization of transcription factors that are critical for gene expression and essential for T cell growth and differentiation. The T cell repertoire is generated in the thymus, by V-(D)-J rearrangement. This repertoire is then shaped by intrathymic selection events to generate a peripheral T cell pool of self-MH restricted, non-autoaggressive T cells. Post-thymic interaction of alpha-beta TR with the pMH complexes shapes TR structural and functional avidity. This is T cell receptor beta variable 25-1 from Homo sapiens (Human).